We begin with the raw amino-acid sequence, 547 residues long: Zinc metalloproteinase-disintegrin-like BjussuMP-1 (547 aa).

The propeptide occupies 1-133; the sequence is EFKVNGEPVV…KKASKLVVTA (133 aa). A Peptidase M12B domain is found at 141–337; sequence RYVEIVVVVD…HNPQCILNEP (197 aa). Positions 144 and 228 each coordinate Ca(2+). Cystine bridges form between C252–C332, C292–C316, and C294–C299. H277 serves as a coordination point for Zn(2+). Residue E278 is part of the active site. The Zn(2+) site is built by H281 and H287. Positions 332, 335, 341, 344, 346, 348, 351, and 354 each coordinate Ca(2+). A Disintegrin domain is found at 339-421; it reads LTVSGNELLE…DCPRNRFHRN (83 aa). Disulfide bonds link C353-C363, C362-C385, C376-C382, C381-C406, C394-C413, C425-C437, C444-C494, C459-C501, C472-C482, C489-C526, and C520-C531. N451 carries N-linked (GlcNAc...) asparagine glycosylation. N504 carries N-linked (GlcNAc...) asparagine glycosylation.

The protein belongs to the venom metalloproteinase (M12B) family. P-III subfamily. P-IIIa sub-subfamily. As to quaternary structure, monomer. Zn(2+) serves as cofactor. As to expression, expressed by the venom gland.

It localises to the secreted. Its activity is regulated as follows. Completely inhibited by EDTA, EGTA, 1,10-phenanthroline, and partially by beta-mercaptoethanol. Is not inhibited by aprotinin and leupeptin. Its function is as follows. This protein is a zinc metalloprotease from snake venom that causes hemorrhage in mice after intradermal injection. It inhibits platelet aggregation induced by collagen and ADP. Has moderate edema activity, but no myotoxic activity. It hydrolyzes the Aalpha-chain and more slowly the Bbeta-chain of fibrinogen, without affecting the gamma-chains. It also shows proteolytic activity on casein. It is unable to clot plasma. It also shows bactericidal activity against E.coli and S.aureus. The protein is Zinc metalloproteinase-disintegrin-like BjussuMP-1 of Bothrops jararacussu (Jararacussu).